We begin with the raw amino-acid sequence, 88 residues long: Acylphosphatase (88 aa).

The region spanning 3 to 88 (RLVALVKGRV…EAGLKGFHVY (86 aa)) is the Acylphosphatase-like domain. Active-site residues include arginine 18 and asparagine 36.

It belongs to the acylphosphatase family.

It carries out the reaction an acyl phosphate + H2O = a carboxylate + phosphate + H(+). The polypeptide is Acylphosphatase (acyP) (Thermus thermophilus (strain ATCC BAA-163 / DSM 7039 / HB27)).